Consider the following 491-residue polypeptide: Glutamyl-tRNA(Gln) amidotransferase subunit A (491 aa).

Catalysis depends on charge relay system residues K79 and S154. S178 acts as the Acyl-ester intermediate in catalysis.

It belongs to the amidase family. GatA subfamily. Heterotrimer of A, B and C subunits.

The enzyme catalyses L-glutamyl-tRNA(Gln) + L-glutamine + ATP + H2O = L-glutaminyl-tRNA(Gln) + L-glutamate + ADP + phosphate + H(+). Functionally, allows the formation of correctly charged Gln-tRNA(Gln) through the transamidation of misacylated Glu-tRNA(Gln) in organisms which lack glutaminyl-tRNA synthetase. The reaction takes place in the presence of glutamine and ATP through an activated gamma-phospho-Glu-tRNA(Gln). This is Glutamyl-tRNA(Gln) amidotransferase subunit A from Synechococcus sp. (strain CC9902).